Here is a 222-residue protein sequence, read N- to C-terminus: MKFFIFILALQQLYVQSFAQDFDFFYFVLQWPGAYCDSRHSCCYPQTGKPAADFGIHGLWPNYKTGGWPQNCNPDSRFDDLRVSDLMSDLQREWPTLSCPSNDGMKFWTHEWEKHGTCAESELDQHDYFEAGLKLKQKANLLHALTNAGIKPDDKFYEMKDIENTIKQVVGFAPGIECNKDSSHNSQLYQIYLCVDTSASKFINCPVMPHGRCDSRVQFPKF.

The signal sequence occupies residues 1 to 19 (MKFFIFILALQQLYVQSFA). An RNA-binding site is contributed by Gln-30. Residues Cys-36 and Cys-42 are joined by a disulfide bond. Residues His-57, Phe-107, 110–111 (HE), and 114–115 (KH) each bind RNA. Catalysis depends on His-57, which acts as the Proton donor. Disulfide bonds link Cys-72–Cys-118, Cys-178–Cys-213, and Cys-194–Cys-205. Glu-111 is a catalytic residue. His-115 (proton acceptor) is an active-site residue.

It belongs to the RNase T2 family.

The enzyme catalyses a ribonucleotidyl-ribonucleotide-RNA + H2O = a 3'-end 3'-phospho-ribonucleotide-RNA + a 5'-end dephospho-ribonucleoside-RNA + H(+). In terms of biological role, may remobilize phosphate, particularly when cells senesce or when phosphate becomes limiting. The sequence is that of Ribonuclease 3 (RNS3) from Arabidopsis thaliana (Mouse-ear cress).